A 225-amino-acid polypeptide reads, in one-letter code: PKHD-type hydroxylase YbiX (225 aa).

Residues 78 to 177 form the Fe2OG dioxygenase domain; that stretch reads TLSTPLFNRY…RVASFMWIQS (100 aa). Positions 96, 98, and 158 each coordinate Fe cation. R168 is a binding site for 2-oxoglutarate.

Fe(2+) serves as cofactor. Requires L-ascorbate as cofactor.

The polypeptide is PKHD-type hydroxylase YbiX (Escherichia coli O81 (strain ED1a)).